The following is a 537-amino-acid chain: ATP synthase subunit alpha (537 aa).

174–181 (GDRQTGKT) contributes to the ATP binding site.

It belongs to the ATPase alpha/beta chains family. As to quaternary structure, F-type ATPases have 2 components, CF(1) - the catalytic core - and CF(0) - the membrane proton channel. CF(1) has five subunits: alpha(3), beta(3), gamma(1), delta(1), epsilon(1). CF(0) has three main subunits: a(1), b(2) and c(9-12). The alpha and beta chains form an alternating ring which encloses part of the gamma chain. CF(1) is attached to CF(0) by a central stalk formed by the gamma and epsilon chains, while a peripheral stalk is formed by the delta and b chains.

Its subcellular location is the cell inner membrane. It catalyses the reaction ATP + H2O + 4 H(+)(in) = ADP + phosphate + 5 H(+)(out). Its function is as follows. Produces ATP from ADP in the presence of a proton gradient across the membrane. The alpha chain is a regulatory subunit. This Verminephrobacter eiseniae (strain EF01-2) protein is ATP synthase subunit alpha.